We begin with the raw amino-acid sequence, 497 residues long: Glycerol kinase (497 aa).

ADP is bound at residue Thr11. The ATP site is built by Thr11, Thr12, and Ser13. Thr11 serves as a coordination point for sn-glycerol 3-phosphate. Residue Arg15 participates in ADP binding. The sn-glycerol 3-phosphate site is built by Arg81, Glu82, Tyr133, and Asp242. Arg81, Glu82, Tyr133, Asp242, and Gln243 together coordinate glycerol. Positions 264 and 306 each coordinate ADP. 4 residues coordinate ATP: Thr264, Gly306, Gln310, and Gly407. ADP-binding residues include Gly407 and Asn411.

The protein belongs to the FGGY kinase family.

The enzyme catalyses glycerol + ATP = sn-glycerol 3-phosphate + ADP + H(+). The protein operates within polyol metabolism; glycerol degradation via glycerol kinase pathway; sn-glycerol 3-phosphate from glycerol: step 1/1. Its activity is regulated as follows. Inhibited by fructose 1,6-bisphosphate (FBP). Key enzyme in the regulation of glycerol uptake and metabolism. Catalyzes the phosphorylation of glycerol to yield sn-glycerol 3-phosphate. The polypeptide is Glycerol kinase (Alcanivorax borkumensis (strain ATCC 700651 / DSM 11573 / NCIMB 13689 / SK2)).